Here is a 547-residue protein sequence, read N- to C-terminus: Chaperonin GroEL (547 aa).

ATP is bound by residues 30-33, Lys-51, 87-91, Gly-415, 479-481, and Asp-495; these read TLGP, DGTTT, and NAA. A disordered region spans residues 526–547; it reads KEEKSDLSVPPQGGMGGMGGMM. Residues 538 to 547 show a composition bias toward gly residues; sequence GGMGGMGGMM.

It belongs to the chaperonin (HSP60) family. Forms a cylinder of 14 subunits composed of two heptameric rings stacked back-to-back. Interacts with the co-chaperonin GroES.

The protein resides in the cytoplasm. It catalyses the reaction ATP + H2O + a folded polypeptide = ADP + phosphate + an unfolded polypeptide.. Together with its co-chaperonin GroES, plays an essential role in assisting protein folding. The GroEL-GroES system forms a nano-cage that allows encapsulation of the non-native substrate proteins and provides a physical environment optimized to promote and accelerate protein folding. The chain is Chaperonin GroEL from Buchnera aphidicola subsp. Tetraneura caerulescens.